A 92-amino-acid chain; its full sequence is Acylphosphatase (92 aa).

The region spanning 5–90 (TYRLVICGLV…GDFVGFQLRE (86 aa)) is the Acylphosphatase-like domain. Active-site residues include Arg-20 and Asn-38.

The protein belongs to the acylphosphatase family.

It carries out the reaction an acyl phosphate + H2O = a carboxylate + phosphate + H(+). This Albidiferax ferrireducens (strain ATCC BAA-621 / DSM 15236 / T118) (Rhodoferax ferrireducens) protein is Acylphosphatase (acyP).